Reading from the N-terminus, the 311-residue chain is Thioredoxin reductase (311 aa).

FAD contacts are provided by residues 15–18 (SGPA), 37–44 (EGTQFGGA), asparagine 53, and valine 86. Cysteine 137 and cysteine 140 are disulfide-bonded. Serine 158, histidine 177, arginine 183, isoleucine 240, and tyrosine 260 together coordinate NADP(+). Residues aspartate 280 and 287-290 (RQAI) contribute to the FAD site. NADP(+) is bound at residue arginine 287.

It belongs to the class-II pyridine nucleotide-disulfide oxidoreductase family. Homodimer. Requires FAD as cofactor.

It localises to the cytoplasm. It catalyses the reaction [thioredoxin]-dithiol + NADP(+) = [thioredoxin]-disulfide + NADPH + H(+). This is Thioredoxin reductase from Mycolicibacterium smegmatis (Mycobacterium smegmatis).